A 204-amino-acid chain; its full sequence is Glutathione S-transferase (204 aa).

Positions 3–80 (PSYKLTYCPV…YLGKQFGLSG (78 aa)) constitute a GST N-terminal domain. Glutathione is bound by residues Y9, W40, K44, 50-52 (GKT), and 64-65 (QS). Residues 82-204 (DDWENLEIDM…WVAKRPPTDL (123 aa)) enclose the GST C-terminal domain.

Belongs to the GST superfamily. Sigma family.

The enzyme catalyses RX + glutathione = an S-substituted glutathione + a halide anion + H(+). The polypeptide is Glutathione S-transferase (Blattella germanica (German cockroach)).